A 138-amino-acid polypeptide reads, in one-letter code: Small ribosomal subunit protein bS6 (138 aa).

The disordered stretch occupies residues 94–138 (VKQDGPLPTPKPTSKENEPEKEEVKPTEEKTESPSKDEKKEDSKE). The segment covering 106 to 138 (TSKENEPEKEEVKPTEEKTESPSKDEKKEDSKE) has biased composition (basic and acidic residues).

It belongs to the bacterial ribosomal protein bS6 family.

In terms of biological role, binds together with bS18 to 16S ribosomal RNA. The sequence is that of Small ribosomal subunit protein bS6 from Prochlorococcus marinus (strain NATL2A).